A 130-amino-acid chain; its full sequence is Small ribosomal subunit protein uS8 (130 aa).

The protein belongs to the universal ribosomal protein uS8 family. Part of the 30S ribosomal subunit. Contacts proteins S5 and S12.

Its function is as follows. One of the primary rRNA binding proteins, it binds directly to 16S rRNA central domain where it helps coordinate assembly of the platform of the 30S subunit. The chain is Small ribosomal subunit protein uS8 from Coxiella burnetii (strain Dugway 5J108-111).